The chain runs to 338 residues: Fe(3+)-binding periplasmic protein (338 aa).

An N-terminal signal peptide occupies residues 1–26 (MKLRISSLGPVALLASSMMLAFGAQA). The Fe cation site is built by histidine 40, glutamate 88, tyrosine 224, and tyrosine 225.

The protein belongs to the bacterial solute-binding protein 1 family. As to quaternary structure, the complex is composed of two ATP-binding proteins (FbpC), two transmembrane proteins (FbpB) and a solute-binding protein (FbpA).

It localises to the periplasm. In terms of biological role, part of the ABC transporter complex FbpABC (TC 3.A.1.10.1) involved in Fe(3+) ions import. This protein specifically binds Fe(3+) and is involved in its transmembrane transport. The sequence is that of Fe(3+)-binding periplasmic protein (fbpA) from Serratia marcescens.